Consider the following 20-residue polypeptide: Cytochrome c oxidase subunit 8B, mitochondrial (20 aa).

The interval 1–20 (LSGKPAKXHLSVGEQAIAMT) is disordered.

It belongs to the cytochrome c oxidase VIII family. Component of the cytochrome c oxidase (complex IV, CIV), a multisubunit enzyme composed of 14 subunits. The complex is composed of a catalytic core of 3 subunits MT-CO1, MT-CO2 and MT-CO3, encoded in the mitochondrial DNA, and 11 supernumerary subunits COX4I, COX5A, COX5B, COX6A, COX6B, COX6C, COX7A, COX7B, COX7C, COX8 and NDUFA4, which are encoded in the nuclear genome. The complex exists as a monomer or a dimer and forms supercomplexes (SCs) in the inner mitochondrial membrane with NADH-ubiquinone oxidoreductase (complex I, CI) and ubiquinol-cytochrome c oxidoreductase (cytochrome b-c1 complex, complex III, CIII), resulting in different assemblies (supercomplex SCI(1)III(2)IV(1) and megacomplex MCI(2)III(2)IV(2)).

The protein resides in the mitochondrion inner membrane. The protein operates within energy metabolism; oxidative phosphorylation. Functionally, component of the cytochrome c oxidase, the last enzyme in the mitochondrial electron transport chain which drives oxidative phosphorylation. The respiratory chain contains 3 multisubunit complexes succinate dehydrogenase (complex II, CII), ubiquinol-cytochrome c oxidoreductase (cytochrome b-c1 complex, complex III, CIII) and cytochrome c oxidase (complex IV, CIV), that cooperate to transfer electrons derived from NADH and succinate to molecular oxygen, creating an electrochemical gradient over the inner membrane that drives transmembrane transport and the ATP synthase. Cytochrome c oxidase is the component of the respiratory chain that catalyzes the reduction of oxygen to water. Electrons originating from reduced cytochrome c in the intermembrane space (IMS) are transferred via the dinuclear copper A center (CU(A)) of subunit 2 and heme A of subunit 1 to the active site in subunit 1, a binuclear center (BNC) formed by heme A3 and copper B (CU(B)). The BNC reduces molecular oxygen to 2 water molecules using 4 electrons from cytochrome c in the IMS and 4 protons from the mitochondrial matrix. The sequence is that of Cytochrome c oxidase subunit 8B, mitochondrial from Oncorhynchus mykiss (Rainbow trout).